Here is a 299-residue protein sequence, read N- to C-terminus: ATP phosphoribosyltransferase (299 aa).

It belongs to the ATP phosphoribosyltransferase family. Long subfamily. Mg(2+) is required as a cofactor.

The protein localises to the cytoplasm. It catalyses the reaction 1-(5-phospho-beta-D-ribosyl)-ATP + diphosphate = 5-phospho-alpha-D-ribose 1-diphosphate + ATP. Its pathway is amino-acid biosynthesis; L-histidine biosynthesis; L-histidine from 5-phospho-alpha-D-ribose 1-diphosphate: step 1/9. Feedback inhibited by histidine. Catalyzes the condensation of ATP and 5-phosphoribose 1-diphosphate to form N'-(5'-phosphoribosyl)-ATP (PR-ATP). Has a crucial role in the pathway because the rate of histidine biosynthesis seems to be controlled primarily by regulation of HisG enzymatic activity. This Shewanella denitrificans (strain OS217 / ATCC BAA-1090 / DSM 15013) protein is ATP phosphoribosyltransferase.